The primary structure comprises 526 residues: Alpha-ketoglutaric semialdehyde dehydrogenase (526 aa).

Residues 159–160 (SN), 185–188 (KAHS), and 240–241 (GS) each bind NADP(+). Catalysis depends on E264, which acts as the Proton acceptor. C301 serves as the catalytic Nucleophile. E393 contributes to the NADP(+) binding site.

The protein belongs to the aldehyde dehydrogenase family.

It catalyses the reaction 2,5-dioxopentanoate + NADP(+) + H2O = 2-oxoglutarate + NADPH + 2 H(+). The protein operates within carbohydrate acid metabolism; D-glucarate degradation. In terms of biological role, catalyzes the NAD(P)(+)-dependent oxidation of alpha-ketoglutaric semialdehyde (alphaKGSA) to alpha-ketoglutarate in the D-glutarate degradation pathway. The chain is Alpha-ketoglutaric semialdehyde dehydrogenase from Acinetobacter baylyi (strain ATCC 33305 / BD413 / ADP1).